Reading from the N-terminus, the 120-residue chain is Ribosome-binding factor A (120 aa).

It belongs to the RbfA family. Monomer. Binds 30S ribosomal subunits, but not 50S ribosomal subunits or 70S ribosomes.

Its subcellular location is the cytoplasm. In terms of biological role, one of several proteins that assist in the late maturation steps of the functional core of the 30S ribosomal subunit. Associates with free 30S ribosomal subunits (but not with 30S subunits that are part of 70S ribosomes or polysomes). Required for efficient processing of 16S rRNA. May interact with the 5'-terminal helix region of 16S rRNA. In Chlorobaculum parvum (strain DSM 263 / NCIMB 8327) (Chlorobium vibrioforme subsp. thiosulfatophilum), this protein is Ribosome-binding factor A.